The sequence spans 335 residues: Holliday junction branch migration complex subunit RuvB (335 aa).

The interval Ala-4 to Tyr-184 is large ATPase domain (RuvB-L). Residues Ile-23, Arg-24, Gly-65, Lys-68, Thr-69, Thr-70, Glu-131–Tyr-133, Arg-174, Tyr-184, and Arg-221 each bind ATP. A Mg(2+)-binding site is contributed by Thr-69. A small ATPAse domain (RuvB-S) region spans residues Asn-185–Ser-255. Residues Ala-258 to Glu-335 are head domain (RuvB-H). The DNA site is built by Arg-294, Arg-313, and Arg-318.

The protein belongs to the RuvB family. In terms of assembly, homohexamer. Forms an RuvA(8)-RuvB(12)-Holliday junction (HJ) complex. HJ DNA is sandwiched between 2 RuvA tetramers; dsDNA enters through RuvA and exits via RuvB. An RuvB hexamer assembles on each DNA strand where it exits the tetramer. Each RuvB hexamer is contacted by two RuvA subunits (via domain III) on 2 adjacent RuvB subunits; this complex drives branch migration. In the full resolvosome a probable DNA-RuvA(4)-RuvB(12)-RuvC(2) complex forms which resolves the HJ.

The protein localises to the cytoplasm. It carries out the reaction ATP + H2O = ADP + phosphate + H(+). Its function is as follows. The RuvA-RuvB-RuvC complex processes Holliday junction (HJ) DNA during genetic recombination and DNA repair, while the RuvA-RuvB complex plays an important role in the rescue of blocked DNA replication forks via replication fork reversal (RFR). RuvA specifically binds to HJ cruciform DNA, conferring on it an open structure. The RuvB hexamer acts as an ATP-dependent pump, pulling dsDNA into and through the RuvAB complex. RuvB forms 2 homohexamers on either side of HJ DNA bound by 1 or 2 RuvA tetramers; 4 subunits per hexamer contact DNA at a time. Coordinated motions by a converter formed by DNA-disengaged RuvB subunits stimulates ATP hydrolysis and nucleotide exchange. Immobilization of the converter enables RuvB to convert the ATP-contained energy into a lever motion, pulling 2 nucleotides of DNA out of the RuvA tetramer per ATP hydrolyzed, thus driving DNA branch migration. The RuvB motors rotate together with the DNA substrate, which together with the progressing nucleotide cycle form the mechanistic basis for DNA recombination by continuous HJ branch migration. Branch migration allows RuvC to scan DNA until it finds its consensus sequence, where it cleaves and resolves cruciform DNA. The chain is Holliday junction branch migration complex subunit RuvB from Photorhabdus laumondii subsp. laumondii (strain DSM 15139 / CIP 105565 / TT01) (Photorhabdus luminescens subsp. laumondii).